The primary structure comprises 237 residues: Class B acid phosphatase (237 aa).

A signal peptide spans 1 to 23; sequence MKKITLALSAVCLLFTLNHSANA. The Nucleophile role is filled by Asp69. Residues Asp69 and Asp71 each contribute to the Mg(2+) site. Residue Asp71 is the Proton donor of the active site. Substrate contacts are provided by residues 137–138 and Lys177; that span reads TG. Asp192 serves as a coordination point for Mg(2+).

It belongs to the class B bacterial acid phosphatase family. In terms of assembly, homotetramer. Mg(2+) is required as a cofactor.

Its subcellular location is the periplasm. It carries out the reaction a phosphate monoester + H2O = an alcohol + phosphate. Functionally, dephosphorylates several organic phosphate monoesters including monophosphate nucleotides (NMPs), coenzyme A (CoA), nicotinamide adenine dinucleotide phosphate (NADP), flavin mononucleotide (FMN) and phosphorylated 5-6 carbon sugars in vitro. Also has a phosphotransferase activity catalyzing the transfer of low-energy phosphate groups from organic phosphate monoesters to free hydroxyl groups of various organic compounds. The protein is Class B acid phosphatase (aphA) of Salmonella typhi.